A 446-amino-acid polypeptide reads, in one-letter code: Na(+)-translocating NADH-quinone reductase subunit A (446 aa).

The protein belongs to the NqrA family. As to quaternary structure, composed of six subunits; NqrA, NqrB, NqrC, NqrD, NqrE and NqrF.

It catalyses the reaction a ubiquinone + n Na(+)(in) + NADH + H(+) = a ubiquinol + n Na(+)(out) + NAD(+). Its function is as follows. NQR complex catalyzes the reduction of ubiquinone-1 to ubiquinol by two successive reactions, coupled with the transport of Na(+) ions from the cytoplasm to the periplasm. NqrA to NqrE are probably involved in the second step, the conversion of ubisemiquinone to ubiquinol. In Vibrio atlanticus (strain LGP32) (Vibrio splendidus (strain Mel32)), this protein is Na(+)-translocating NADH-quinone reductase subunit A.